Here is a 136-residue protein sequence, read N- to C-terminus: Large ribosomal subunit protein bL19 (136 aa).

This sequence belongs to the bacterial ribosomal protein bL19 family.

This protein is located at the 30S-50S ribosomal subunit interface and may play a role in the structure and function of the aminoacyl-tRNA binding site. This chain is Large ribosomal subunit protein bL19, found in Xylella fastidiosa (strain 9a5c).